We begin with the raw amino-acid sequence, 146 residues long: Hemoglobin subunit beta-0 (146 aa).

A Globin domain is found at 2 to 146 (EWTDFERATI…VVSSLGRQYH (145 aa)). Heme b-binding residues include His-63 and His-92.

This sequence belongs to the globin family. Heterotetramer of two alpha chains and two beta chains. Red blood cells.

In terms of biological role, involved in oxygen transport from gills to the various peripheral tissues. The sequence is that of Hemoglobin subunit beta-0 (hbb0) from Pagothenia borchgrevinki (Bald rockcod).